The sequence spans 2174 residues: Mediator of RNA polymerase II transcription subunit 13 (2174 aa).

A Phosphoserine modification is found at Ser395. Residues 435-477 form a disordered region; the sequence is RNAGQQGQAPSLGQQQQILPKHKTNEKQEKSEKPQKRPLTPFH. Positions 438 to 451 are enriched in low complexity; the sequence is GQQGQAPSLGQQQQ. Residues 457 to 469 show a composition bias toward basic and acidic residues; the sequence is KTNEKQEKSEKPQ. 4 positions are modified to phosphoserine: Ser500, Ser504, Ser530, and Ser537. Basic and acidic residues predominate over residues 709 to 730; the sequence is FPDKKDRQNSEREAGKKHKVED. 3 disordered regions span residues 709-735, 749-769, and 787-816; these read FPDKKDRQNSEREAGKKHKVEDGTSSV, SPSIKQDAPRPTSHARPPSTS, and FNSDEDELTPGSKKSANGSDDKASCKESKT. Residues 805–815 are compositionally biased toward basic and acidic residues; sequence SDDKASCKESK. Ser826 and Ser890 each carry phosphoserine. Residues 959–1054 form a disordered region; that stretch reads FIKEGDGSNM…ASTPSTCRPL (96 aa). The segment covering 992–1003 has biased composition (low complexity); sequence PPSNSGAGILPS. Pro residues predominate over residues 1004–1015; that stretch reads PSTPRFPTPRTP. Ser1029 bears the Phosphoserine mark. A compositionally biased stretch (polar residues) spans 1040–1053; that stretch reads DLYSPASTPSTCRP. 2 short sequence motifs (LXXLL motif) span residues 1188 to 1192 and 1279 to 1283; these read LILLL and LRMLL. 2 stretches are compositionally biased toward polar residues: residues 1484 to 1498 and 1563 to 1606; these read SQSLITPPQMTNTGN and SMNS…SLPT. Disordered regions lie at residues 1484–1505, 1557–1617, and 2015–2048; these read SQSLITPPQMTNTGNANTPSAT, SFPP…ESTM, and LPASPTGSPVHSPGSHYPHGGDAGKGQSTDRLLS.

This sequence belongs to the Mediator complex subunit 13 family. In terms of assembly, component of the Mediator complex, which is composed of MED1, MED4, MED6, MED7, MED8, MED9, MED10, MED11, MED12, MED13, MED13L, MED14, MED15, MED16, MED17, MED18, MED19, MED20, MED21, MED22, MED23, MED24, MED25, MED26, MED27, MED29, MED30, MED31, CCNC, CDK8 and CDC2L6/CDK11. The MED12, MED13, CCNC and CDK8 subunits form a distinct module termed the CDK8 module. Mediator containing the CDK8 module is less active than Mediator lacking this module in supporting transcriptional activation. Individual preparations of the Mediator complex lacking one or more distinct subunits have been variously termed ARC, CRSP, DRIP, PC2, SMCC and TRAP. Ubiquitous.

It localises to the nucleus. Functionally, component of the Mediator complex, a coactivator involved in the regulated transcription of nearly all RNA polymerase II-dependent genes. Mediator functions as a bridge to convey information from gene-specific regulatory proteins to the basal RNA polymerase II transcription machinery. Mediator is recruited to promoters by direct interactions with regulatory proteins and serves as a scaffold for the assembly of a functional preinitiation complex with RNA polymerase II and the general transcription factors. This Homo sapiens (Human) protein is Mediator of RNA polymerase II transcription subunit 13.